The following is a 104-amino-acid chain: Chitin-binding protein 2 (104 aa).

Oligomer in an unreduced state. Glycosylated.

In terms of biological role, chitin-binding protein. Has antifungal activity against C.krusei, C.albicans, C.tropicalis and C.parapsilosis. Inhibits C.albicans by increasing cell membrane permeability and production of reactive oxygen species. Has no hemagglutinating activity. This is Chitin-binding protein 2 from Moringa oleifera (Horseradish tree).